A 589-amino-acid polypeptide reads, in one-letter code: MSVSVHETRKSRSSTGSMNVTLFHKASHPDCVLAHLNTLRKHCMFTDVTLWAGDRAFPCHRAVLAASSRYFEAMFSHGLRESRDDTVNFQDNLHPEVLELLLDFAYSSRIAINEENAESLLEAGDMLQFHDVRDAAAEFLEKNLFPSNCLGMMLLSDAHQCRRLYEFSWRMCLVHFETVRQSEDFNSLSKDTLLDLISSDELETEDERVVFEAILQWVKHDLEPRKVHLPELLRSVRLALLPSDCLQEAVSSEALLMADERTKLIMDEALRCKTRILQNDGVVTSPCARPRKAGHTLLILGGQTFMCDKIYQVDHKAKEIIPKADLPSPRKEFSASAIGCKVYVTGGRGSENGVSKDVWVYDTVHEEWSKAAPMLIARFGHGSAELENCLYVVGGHTSLAGVFPASPSVSLKQVEKYDPGANKWMMVAPLRDGVSNAAVVSAKLKLFVFGGTSIHRDMVSKVQCYDPSENRWTIKAECPQPWRYTAAAVLGSQIFIMGGDTEFTAASAYRFDCETNQWTRIGDMTAKRMSCHALASGNKLYVVGGYFGTQRCKTLDCYDPTSDTWNCITTVPYSLIPTAFVSTWKHLPA.

One can recognise a BTB domain in the interval 46-114 (TDVTLWAGDR…AYSSRIAINE (69 aa)). The BACK domain occupies 149–250 (CLGMMLLSDA…LPSDCLQEAV (102 aa)). 6 Kelch repeats span residues 296 to 340 (TLLI…AIGC), 341 to 388 (KVYV…ELEN), 389 to 444 (CLYV…SAKL), 446 to 492 (LFVF…VLGS), 494 to 538 (IFIM…ASGN), and 539 to 585 (KLYV…STWK).

Component of the BCR(KLHL25) E3 ubiquitin ligase complex, at least composed of CUL3, KLHL25 and RBX1.

Its pathway is protein modification; protein ubiquitination. Its function is as follows. Substrate-specific adapter of a BCR (BTB-CUL3-RBX1) E3 ubiquitin ligase complex involved in various processes, such as translation homeostasis and lipid synthesis. The BCR(KLHL25) ubiquitin ligase complex acts by mediating ubiquitination of hypophosphorylated EIF4EBP1 (4E-BP1): ubiquitination and subsequent degradation of hypophosphorylated EIF4EBP1 (4E-BP1) probably serves as a homeostatic mechanism to maintain translation and prevent eIF4E inhibition when eIF4E levels are low. The BCR(KLHL25) complex does not target EIF4EBP1 (4E-BP1) when it is hyperphosphorylated or associated with eIF4E. The BCR(KLHL25) complex also acts as a regulator of lipid synthesis by mediating ubiquitination and degradation of ACLY, thereby inhibiting lipid synthesis. BCR(KLHL25)-mediated degradation of ACLY promotes fatty acid oxidation and is required for differentiation of inducible regulatory T (iTreg) cells. This Homo sapiens (Human) protein is Kelch-like protein 25.